Here is a 58-residue protein sequence, read N- to C-terminus: MLAIFNIYLDNAFHLNGIILAKLPEAYAIFDPIVDVMPIIPVFFFLLAFVWQASVSFR.

Positions 1–21 are excised as a propeptide; sequence MLAIFNIYLDNAFHLNGIILA. A helical membrane pass occupies residues 29–49; it reads IFDPIVDVMPIIPVFFFLLAF.

This sequence belongs to the PsbK family. As to quaternary structure, PSII is composed of 1 copy each of membrane proteins PsbA, PsbB, PsbC, PsbD, PsbE, PsbF, PsbH, PsbI, PsbJ, PsbK, PsbL, PsbM, PsbT, PsbX, PsbY, PsbZ, Psb30/Ycf12, at least 3 peripheral proteins of the oxygen-evolving complex and a large number of cofactors. It forms dimeric complexes.

It is found in the plastid. Its subcellular location is the chloroplast thylakoid membrane. Its function is as follows. One of the components of the core complex of photosystem II (PSII). PSII is a light-driven water:plastoquinone oxidoreductase that uses light energy to abstract electrons from H(2)O, generating O(2) and a proton gradient subsequently used for ATP formation. It consists of a core antenna complex that captures photons, and an electron transfer chain that converts photonic excitation into a charge separation. The sequence is that of Photosystem II reaction center protein K from Physcomitrium patens (Spreading-leaved earth moss).